Reading from the N-terminus, the 535-residue chain is Mannan polymerase I complex VAN1 subunit (535 aa).

At 1-64 the chain is on the cytoplasmic side; sequence MGMFFNLRSN…STPSKFQLTV (64 aa). The segment at 22–48 is disordered; that stretch reads LPISRNGSSNNIKDKRSEHNSNSLKGK. The residue at position 25 (Ser25) is a Phosphoserine. Residues 65–81 traverse the membrane as a helical; Signal-anchor for type II membrane protein segment; sequence SITSLIIIAVLSLYLFI. Topologically, residues 82 to 535 are lumenal; sequence SFLSGMGIGV…REREKRRQSE (454 aa). 2 N-linked (GlcNAc...) asparagine glycosylation sites follow: Asn215 and Asn251.

The protein belongs to the ANP1/MMN9/VAN1 family. In terms of assembly, component of the M-Pol I complex which contains MNN9 and VAN1. In terms of processing, glycosylated.

It localises to the endoplasmic reticulum membrane. The protein localises to the golgi apparatus membrane. Involved in regulation of the phosphorylation of a number of proteins, some of which appear to be important in cell growth control. Functionally, the M-Pol I complex possesses alpha-1,6-mannosyltransferase activity and is probably involved in the elongation of the mannan backbone of N-linked glycans on cell wall and periplasmic proteins. The polypeptide is Mannan polymerase I complex VAN1 subunit (VAN1) (Saccharomyces cerevisiae (strain ATCC 204508 / S288c) (Baker's yeast)).